Consider the following 31-residue polypeptide: Cytochrome b6-f complex subunit 6 (31 aa).

A helical transmembrane segment spans residues 4–24 (ITSYFGFLLAALTITSALFIG).

It belongs to the PetL family. The 4 large subunits of the cytochrome b6-f complex are cytochrome b6, subunit IV (17 kDa polypeptide, PetD), cytochrome f and the Rieske protein, while the 4 small subunits are PetG, PetL, PetM and PetN. The complex functions as a dimer.

It is found in the plastid. It localises to the chloroplast thylakoid membrane. Component of the cytochrome b6-f complex, which mediates electron transfer between photosystem II (PSII) and photosystem I (PSI), cyclic electron flow around PSI, and state transitions. PetL is important for photoautotrophic growth as well as for electron transfer efficiency and stability of the cytochrome b6-f complex. In Citrus sinensis (Sweet orange), this protein is Cytochrome b6-f complex subunit 6.